The chain runs to 883 residues: EEF1AKMT4-ECE2 readthrough transcript protein (883 aa).

Positions 1-160 (MASPGAGRAP…VHTVDQVLSE (160 aa)) are methyltransferase-like region. Residues 1–178 (MASPGAGRAP…QLLGSRTQLE (178 aa)) lie on the Cytoplasmic side of the membrane. 2 residues coordinate S-adenosyl-L-methionine: Trp26 and Tyr30. At Tyr39 the chain carries Phosphotyrosine. Residues Trp41, Gly66, 88 to 89 (DY), 113 to 114 (DV), and Lys130 contribute to the S-adenosyl-L-methionine site. The helical transmembrane segment at 179 to 199 (LVLAGASLLLAALLLGCLVAL) threads the bilayer. The Lumenal segment spans residues 200–883 (GVQYHRDPSH…MNPGQLCEVW (684 aa)). Positions 211–883 (TCLTEACIRV…MNPGQLCEVW (673 aa)) constitute a Peptidase M13 domain. 5 disulfide bridges follow: Cys212-Cys217, Cys235-Cys868, Cys243-Cys828, Cys299-Cys548, and Cys757-Cys880. 7 N-linked (GlcNAc...) asparagine glycosylation sites follow: Asn279, Asn283, Asn324, Asn384, Asn429, Asn496, and Asn652. Residue His720 participates in Zn(2+) binding. Glu721 is an active-site residue. His724 is a binding site for Zn(2+). N-linked (GlcNAc...) asparagine glycosylation is found at Asn745 and Asn753. Glu780 is a binding site for Zn(2+). Residue Asp784 is the Proton donor of the active site.

This sequence in the N-terminal section; belongs to the methyltransferase superfamily. The protein in the C-terminal section; belongs to the peptidase M13 family. Requires Zn(2+) as cofactor.

The protein localises to the golgi apparatus membrane. It is found in the cytoplasmic vesicle. It localises to the secretory vesicle membrane. The catalysed reaction is Hydrolysis of the 21-Trp-|-Val-22 bond in big endothelin to form endothelin 1.. With respect to regulation, inhibited by phosphoramidon. Functionally, converts big endothelin-1 to endothelin-1. May also have methyltransferase activity. May play a role in amyloid-beta processing. The protein is EEF1AKMT4-ECE2 readthrough transcript protein of Homo sapiens (Human).